The primary structure comprises 746 residues: Exostosin-1 (746 aa).

Topologically, residues 1-7 are cytoplasmic; the sequence is MQAKKRY. A helical; Signal-anchor for type II membrane protein membrane pass occupies residues 8 to 28; it reads FILLSAGSCLALLFYFGGVQF. Topologically, residues 29–746 are lumenal; sequence RASRSHSRRE…RKKYRDIERL (718 aa). N-linked (GlcNAc...) asparagine glycosylation is present at N89. 2 cysteine pairs are disulfide-bonded: C98–C103 and C109–C152. 2 residues coordinate a protein: L166 and Y203. UDP contacts are provided by K267, K269, Y271, and R280. Cysteines 298 and 312 form a disulfide. H300 contacts a protein. Y319 and Y324 together coordinate UDP. The N-linked (GlcNAc...) asparagine glycan is linked to N330. 2 disulfides stabilise this stretch: C334–C355 and C652–C704. The UDP site is built by R346 and E349.

The protein belongs to the glycosyltransferase 47 family. Part of the heparan sulfate polymerase, a dimeric complex composed of EXT1 and EXT2. Could also form homooligomeric complexes. Interacts with NDST1. Post-translationally, N-glycosylated.

The protein localises to the golgi apparatus membrane. It localises to the golgi apparatus. Its subcellular location is the cis-Golgi network membrane. It is found in the endoplasmic reticulum membrane. The catalysed reaction is 3-O-{alpha-D-GlcNAc-[(1-&gt;4)-beta-D-GlcA-(1-&gt;4)-alpha-D-GlcNAc](n)-(1-&gt;4)-beta-D-GlcA-(1-&gt;3)-beta-D-Gal-(1-&gt;3)-beta-D-Gal-(1-&gt;4)-beta-D-Xyl}-L-seryl-[protein] + UDP-alpha-D-glucuronate = 3-O-{[(1-&gt;4)-beta-D-GlcA-(1-&gt;4)-alpha-D-GlcNAc](n+1)-(1-&gt;4)-beta-D-GlcA-(1-&gt;3)-beta-D-Gal-(1-&gt;3)-beta-D-Gal-(1-&gt;4)-beta-D-Xyl}-L-seryl-[protein] + UDP + H(+). It functions in the pathway protein modification; protein glycosylation. In terms of biological role, glycosyltransferase forming with EXT2 the heterodimeric heparan sulfate polymerase which catalyzes the elongation of the heparan sulfate glycan backbone. Glycan backbone extension consists in the alternating transfer of (1-&gt;4)-beta-D-GlcA and (1-&gt;4)-alpha-D-GlcNAc residues from their respective UDP-sugar donors. Both EXT1 and EXT2 are required for the full activity of the polymerase since EXT1 bears the N-acetylglucosaminyl-proteoglycan 4-beta-glucuronosyltransferase activity within the complex while EXT2 carries the glucuronosyl-N-acetylglucosaminyl-proteoglycan 4-alpha-N-acetylglucosaminyltransferase activity. Heparan sulfate proteoglycans are ubiquitous components of the extracellular matrix and play an important role in tissue homeostasis and signaling. This is Exostosin-1 from Mus musculus (Mouse).